Reading from the N-terminus, the 24-residue chain is LSAMLEDTENWLYEELSLTQDPVV.

Residue threonine 19 is modified to Phosphothreonine.

The protein belongs to the heat shock protein 70 family. Homodimer. In the testis, forms a complex with p53 at 32.5 degrees Celsius which is scrotal temperature but not at 37 or 42 degrees Celsius. As to expression, expressed at high levels in testis and at much lower levels in brain. In testis, expressed mainly in germ cells. Widespread in brain with highest expression in cerebellum and medulla oblongata. Also expressed in renal medulla of water-restricted animals.

The protein resides in the cytoplasm. It is found in the nucleus. In terms of biological role, possesses chaperone activity in vitro where it inhibits aggregation of citrate synthase. The chain is Heat shock 70 kDa protein 4L (Hspa4l) from Rattus norvegicus (Rat).